The primary structure comprises 94 residues: Selenoprotein K (94 aa).

The helical transmembrane segment at 20–42 threads the bilayer; that stretch reads LSFITDFFWGIAEFVVFFFKTLL. Residues 48–94 form a disordered region; that stretch reads KRRGYGGSSDSRYDDGRGPPGNPPRRMGRISHLRGPSPPPMAGGUGR. Residue Sec92 is a non-standard amino acid, selenocysteine.

The protein belongs to the selenoprotein K family. As to quaternary structure, interacts with DERL1, DERL2, DERL3 and SELENOS. The SELENOK-SELENOS complex interacts with VCP. Interacts with ZDHHC6. Post-translationally, cleaved by CAPN2/m-calpain in resting macrophages but not in activated macrophages. Macrophage activation up-regulates expression of the calpain inhibitor CAST/calpastatin, resulting in inhibition of CAPN2 activity. Truncated SELENOK proteins produced by failed UGA/Sec decoding are ubiquitinated by the CRL2(KLHDC2) complex, which recognizes the diglycine (Gly-Gly) at the C-terminus of truncated SELENOK proteins.

Its subcellular location is the endoplasmic reticulum membrane. It is found in the cell membrane. In terms of biological role, required for Ca(2+) flux in immune cells and plays a role in T-cell proliferation and in T-cell and neutrophil migration. Involved in endoplasmic reticulum-associated degradation (ERAD) of soluble glycosylated proteins. Required for palmitoylation and cell surface expression of CD36 and involved in macrophage uptake of low-density lipoprotein and in foam cell formation. Together with ZDHHC6, required for palmitoylation of ITPR1 in immune cells, leading to regulate ITPR1 stability and function. Plays a role in protection of cells from ER stress-induced apoptosis. Protects cells from oxidative stress when overexpressed in cardiomyocytes. The protein is Selenoprotein K of Rattus norvegicus (Rat).